We begin with the raw amino-acid sequence, 194 residues long: MRQSSQVRETKETKIKLNLQLDESTNVSIQTGVGFFDHMLTLFARHGRFGLQVEAEGDVFVDAHHTVEDVGIVLGNCLKEALQNKEGINRYGSAYVPMDESLGFVAIDISGRSYCVFQGELTNPKLGDFDTELTEEFFRAVAHAANITLHARVLYGSNTHHKIEALFKAFGRALREAVEKNANITGVNSTKGML.

The protein belongs to the imidazoleglycerol-phosphate dehydratase family.

Its subcellular location is the cytoplasm. The enzyme catalyses D-erythro-1-(imidazol-4-yl)glycerol 3-phosphate = 3-(imidazol-4-yl)-2-oxopropyl phosphate + H2O. The protein operates within amino-acid biosynthesis; L-histidine biosynthesis; L-histidine from 5-phospho-alpha-D-ribose 1-diphosphate: step 6/9. In Bacillus cereus (strain B4264), this protein is Imidazoleglycerol-phosphate dehydratase.